Here is an 818-residue protein sequence, read N- to C-terminus: Protocadherin beta-1 (818 aa).

An N-terminal signal peptide occupies residues 1-28 (MAGTRRKSLQNRQVGSLLIFLCISVGDA). The Extracellular segment spans residues 29–691 (TTIRYSVAEE…RKVNPSTKYL (663 aa)). 5 Cadherin domains span residues 35 to 133 (VAEE…APVF), 138 to 242 (PLLK…VPQF), 243 to 347 (SRLV…PPEV), 348 to 452 (MVSS…PPIF), and 457 to 562 (YILT…RPMI). N-linked (GlcNAc...) asparagine glycosylation is found at N169, N209, N257, and N419. An N-linked (GlcNAc...) asparagine glycan is attached at N568. In terms of domain architecture, Cadherin 6 spans 577–672 (VPRSAEAGYL…LVDGFSEPYL (96 aa)). The helical transmembrane segment at 692–712 (VISLVILSFLFLLSVIVIFII) threads the bilayer. At 713-818 (HVYQKIKYRE…GHDQVSDDYM (106 aa)) the chain is on the cytoplasmic side. The disordered stretch occupies residues 789 to 818 (MEAGSSLPPNSDRNKSQRLEGHDQVSDDYM). Residues 800–818 (DRNKSQRLEGHDQVSDDYM) are compositionally biased toward basic and acidic residues.

The protein resides in the cell membrane. Potential calcium-dependent cell-adhesion protein. May be involved in the establishment and maintenance of specific neuronal connections in the brain. This is Protocadherin beta-1 (PCDHB1) from Homo sapiens (Human).